The sequence spans 262 residues: Shikimate dehydrogenase (NADP(+)) (262 aa).

Shikimate contacts are provided by residues 15–17 (SRS) and Thr-62. Residue Lys-66 is the Proton acceptor of the active site. Glu-78 is a binding site for NADP(+). Positions 87 and 102 each coordinate shikimate. NADP(+)-binding positions include 126-130 (GAGGA), 150-155 (NRTQQR), and Met-214. Tyr-216 provides a ligand contact to shikimate. Gly-236 contacts NADP(+).

It belongs to the shikimate dehydrogenase family. In terms of assembly, homodimer.

It catalyses the reaction shikimate + NADP(+) = 3-dehydroshikimate + NADPH + H(+). It functions in the pathway metabolic intermediate biosynthesis; chorismate biosynthesis; chorismate from D-erythrose 4-phosphate and phosphoenolpyruvate: step 4/7. In terms of biological role, involved in the biosynthesis of the chorismate, which leads to the biosynthesis of aromatic amino acids. Catalyzes the reversible NADPH linked reduction of 3-dehydroshikimate (DHSA) to yield shikimate (SA). The polypeptide is Shikimate dehydrogenase (NADP(+)) (Acinetobacter baylyi (strain ATCC 33305 / BD413 / ADP1)).